Here is a 334-residue protein sequence, read N- to C-terminus: Ornithine carbamoyltransferase (334 aa).

Carbamoyl phosphate contacts are provided by residues Ser57–Thr60, Gln84, Arg108, and His135–Gln138. L-ornithine contacts are provided by residues Asn169, Asp233, and Ser237–Met238. Carbamoyl phosphate-binding positions include Cys275–Leu276 and Arg320.

Belongs to the aspartate/ornithine carbamoyltransferase superfamily. OTCase family.

The protein localises to the cytoplasm. It carries out the reaction carbamoyl phosphate + L-ornithine = L-citrulline + phosphate + H(+). The protein operates within amino-acid biosynthesis; L-arginine biosynthesis; L-arginine from L-ornithine and carbamoyl phosphate: step 1/3. Reversibly catalyzes the transfer of the carbamoyl group from carbamoyl phosphate (CP) to the N(epsilon) atom of ornithine (ORN) to produce L-citrulline. In Pasteurella multocida (strain Pm70), this protein is Ornithine carbamoyltransferase (argF).